The following is a 430-amino-acid chain: Enolase (430 aa).

Q163 is a (2R)-2-phosphoglycerate binding site. E205 serves as the catalytic Proton donor. Residues D242, E287, and D314 each contribute to the Mg(2+) site. K339, R368, S369, and K390 together coordinate (2R)-2-phosphoglycerate. K339 (proton acceptor) is an active-site residue.

The protein belongs to the enolase family. It depends on Mg(2+) as a cofactor.

It is found in the cytoplasm. The protein resides in the secreted. The protein localises to the cell surface. The enzyme catalyses (2R)-2-phosphoglycerate = phosphoenolpyruvate + H2O. It functions in the pathway carbohydrate degradation; glycolysis; pyruvate from D-glyceraldehyde 3-phosphate: step 4/5. Functionally, catalyzes the reversible conversion of 2-phosphoglycerate (2-PG) into phosphoenolpyruvate (PEP). It is essential for the degradation of carbohydrates via glycolysis. This Exiguobacterium sp. (strain ATCC BAA-1283 / AT1b) protein is Enolase.